The following is an 865-amino-acid chain: Protein translocase subunit SecA (865 aa).

ATP contacts are provided by residues glutamine 85, 103-107, and aspartate 505; that span reads GEGKT. The Zn(2+) site is built by cysteine 847, cysteine 849, cysteine 858, and histidine 859.

This sequence belongs to the SecA family. In terms of assembly, monomer and homodimer. Part of the essential Sec protein translocation apparatus which comprises SecA, SecYEG and auxiliary proteins SecDF. Other proteins may also be involved. Requires Zn(2+) as cofactor.

The protein localises to the cell membrane. Its subcellular location is the cytoplasm. The enzyme catalyses ATP + H2O + cellular proteinSide 1 = ADP + phosphate + cellular proteinSide 2.. In terms of biological role, part of the Sec protein translocase complex. Interacts with the SecYEG preprotein conducting channel. Has a central role in coupling the hydrolysis of ATP to the transfer of proteins into and across the cell membrane, serving as an ATP-driven molecular motor driving the stepwise translocation of polypeptide chains across the membrane. This chain is Protein translocase subunit SecA, found in Lactococcus lactis subsp. cremoris (strain MG1363).